The sequence spans 309 residues: 4-diphosphocytidyl-2-C-methyl-D-erythritol kinase (309 aa).

Lys28 is a catalytic residue. 120–130 (PSQAGMGGGSS) serves as a coordination point for ATP. Residue Asp162 is part of the active site.

Belongs to the GHMP kinase family. IspE subfamily.

It catalyses the reaction 4-CDP-2-C-methyl-D-erythritol + ATP = 4-CDP-2-C-methyl-D-erythritol 2-phosphate + ADP + H(+). It functions in the pathway isoprenoid biosynthesis; isopentenyl diphosphate biosynthesis via DXP pathway; isopentenyl diphosphate from 1-deoxy-D-xylulose 5-phosphate: step 3/6. Catalyzes the phosphorylation of the position 2 hydroxy group of 4-diphosphocytidyl-2C-methyl-D-erythritol. In Polaromonas sp. (strain JS666 / ATCC BAA-500), this protein is 4-diphosphocytidyl-2-C-methyl-D-erythritol kinase.